The following is a 902-amino-acid chain: Gamma-tubulin complex component 2 (902 aa).

Tyrosine 83 carries the post-translational modification Phosphotyrosine. Positions 875-902 (ERSQKAAPQVPVLRGPPAPAPRVAVTAQ) are disordered.

Belongs to the TUBGCP family. Component of the gamma-tubulin ring complex (gTuRC) consisting of TUBGCP2, TUBGCP3, TUBGCP4, TUBGCP5 and TUBGCP6 and gamma-tubulin TUBG1 or TUBG2. TUBGCP2, TUBGCP3, TUBGCP4, TUBGCP5 and TUBGCP6 assemble in a 5:5:2:1:1 stoichiometry; each is associated with a gamma-tubulin, thereby arranging 14 gamma-tubulins in a helical manner. Gamma-tubulin at the first position is blocked by TUBGCP3 at the last position, allowing 13 protafilaments to grow into a microtubule. The gTuRC (via TUBGCP3 and TUBGCP6) interacts with ACTB and MZT1; the interactions form a luminal bridge that stabilizes the initial structure during complex assembly. The gTuRC (via TUBGCP2) interacts with MZT2A/MZT2B and CDK5RAP2 (via CM1 motif); the interactions play a role in gTuRC activation. Interacts with ATF5; the ATF5:PCNT:polyglutamylated tubulin (PGT) tripartite unites the mother centriole and the pericentriolar material (PCM) in the centrosome.

It is found in the cytoplasm. Its subcellular location is the cytoskeleton. The protein localises to the microtubule organizing center. It localises to the centrosome. In terms of biological role, component of the gamma-tubulin ring complex (gTuRC) which mediates microtubule nucleation. The gTuRC regulates the minus-end nucleation of alpha-beta tubulin heterodimers that grow into microtubule protafilaments, a critical step in centrosome duplication and spindle formation. Plays a role in neuronal migration. The polypeptide is Gamma-tubulin complex component 2 (TUBGCP2) (Pongo abelii (Sumatran orangutan)).